Here is a 428-residue protein sequence, read N- to C-terminus: Protein Wnt-8b (428 aa).

The signal sequence occupies residues 1 to 22 (MFYTGSFWFIFFILPAIPFCHS). Cysteines 54 and 65 form a disulfide. N-linked (GlcNAc...) asparagine glycans are attached at residues Asn-123 and Asn-176. 10 disulfides stabilise this stretch: Cys-177–Cys-185, Cys-187–Cys-205, Cys-253–Cys-267, Cys-255–Cys-262, Cys-329–Cys-367, Cys-345–Cys-360, Cys-364–Cys-406, Cys-382–Cys-397, Cys-384–Cys-394, and Cys-389–Cys-390. A lipid anchor (O-palmitoleoyl serine) is attached at Ser-259. The N-linked (GlcNAc...) asparagine glycan is linked to Asn-332.

This sequence belongs to the Wnt family. Post-translationally, palmitoleoylation is required for efficient binding to frizzled receptors. Depalmitoleoylation leads to Wnt signaling pathway inhibition. Proteolytic processing by tiki1 and tiki2 promotes oxidation and formation of large disulfide-bond oligomers, leading to inactivation of wnt8b. In adults, in brain.

The protein localises to the secreted. It localises to the extracellular space. It is found in the extracellular matrix. Its function is as follows. Ligand for members of the frizzled family of seven transmembrane receptors. Plays a role in the initiation of dorsal axis development. May activate a Nieuwkoop center-like signaling pathway. The polypeptide is Protein Wnt-8b (wnt8b) (Xenopus laevis (African clawed frog)).